A 201-amino-acid chain; its full sequence is Large ribosomal subunit protein bL25 (201 aa).

The protein belongs to the bacterial ribosomal protein bL25 family. CTC subfamily. In terms of assembly, part of the 50S ribosomal subunit; part of the 5S rRNA/L5/L18/L25 subcomplex. Contacts the 5S rRNA. Binds to the 5S rRNA independently of L5 and L18.

In terms of biological role, this is one of the proteins that binds to the 5S RNA in the ribosome where it forms part of the central protuberance. The polypeptide is Large ribosomal subunit protein bL25 (Ectopseudomonas mendocina (strain ymp) (Pseudomonas mendocina)).